The chain runs to 697 residues: Hormonally up-regulated neu tumor-associated kinase homolog (697 aa).

In terms of domain architecture, Protein kinase spans 55–313 (YLIGRKLGEG…IQQALANRWL (259 aa)). ATP-binding positions include 61 to 69 (LGEGSFAKV) and lysine 84. Residue aspartate 179 is the Proton acceptor of the active site. Basic and acidic residues-rich tracts occupy residues 405 to 424 (KMNK…KRGE) and 460 to 473 (PVKE…ERES). Disordered stretches follow at residues 405 to 480 (KMNK…LSPF) and 586 to 642 (DNTS…NCVR). Polar residues predominate over residues 586-600 (DNTSPIKGHSNQASF). Over residues 607-626 (SPSSPESMSPTSPHSPHSPS) the composition is skewed to low complexity. The segment covering 627–637 (CNNNISGNLGS) has biased composition (polar residues).

The protein belongs to the protein kinase superfamily. CAMK Ser/Thr protein kinase family. SNF1 subfamily.

The catalysed reaction is L-seryl-[protein] + ATP = O-phospho-L-seryl-[protein] + ADP + H(+). The enzyme catalyses L-threonyl-[protein] + ATP = O-phospho-L-threonyl-[protein] + ADP + H(+). The sequence is that of Hormonally up-regulated neu tumor-associated kinase homolog (hunk) from Xenopus tropicalis (Western clawed frog).